The sequence spans 234 residues: 1-(5-phosphoribosyl)-5-[(5-phosphoribosylamino)methylideneamino] imidazole-4-carboxamide isomerase (234 aa).

Asp-9 serves as the catalytic Proton acceptor. Catalysis depends on Asp-131, which acts as the Proton donor.

This sequence belongs to the HisA/HisF family.

It is found in the cytoplasm. The catalysed reaction is 1-(5-phospho-beta-D-ribosyl)-5-[(5-phospho-beta-D-ribosylamino)methylideneamino]imidazole-4-carboxamide = 5-[(5-phospho-1-deoxy-D-ribulos-1-ylimino)methylamino]-1-(5-phospho-beta-D-ribosyl)imidazole-4-carboxamide. The protein operates within amino-acid biosynthesis; L-histidine biosynthesis; L-histidine from 5-phospho-alpha-D-ribose 1-diphosphate: step 4/9. This Staphylococcus aureus (strain MRSA252) protein is 1-(5-phosphoribosyl)-5-[(5-phosphoribosylamino)methylideneamino] imidazole-4-carboxamide isomerase.